The primary structure comprises 332 residues: Thiosulfate-binding protein (332 aa).

Positions 1–22 (MKRLFSASLLAAGLALGGAAHA) are cleaved as a signal peptide.

The protein belongs to the prokaryotic sulfate-binding protein family.

The protein localises to the periplasm. In terms of biological role, binds thiosulfate specifically and with high affinity. Has no detectable affinity for sulfate. The chain is Thiosulfate-binding protein from Pseudomonas aeruginosa (strain ATCC 15692 / DSM 22644 / CIP 104116 / JCM 14847 / LMG 12228 / 1C / PRS 101 / PAO1).